The sequence spans 75 residues: Dermaseptin-related peptide (75 aa).

The N-terminal stretch at 1-22 is a signal peptide; sequence MAFLNKSLLLVLFLGLVSLSIC. A propeptide spanning residues 23–43 is cleaved from the precursor; that stretch reads EEERRENEDEEEQEDDEQSEM. Positions 24-44 are disordered; it reads EERRENEDEEEQEDDEQSEMR. Residues 30–40 show a composition bias toward acidic residues; it reads EDEEEQEDDEQ. The residue at position 72 (Q72) is a Glutamine amide. The propeptide occupies 74–75; the sequence is EQ.

Expressed by the skin glands.

The protein localises to the secreted. Functionally, has antibacterial activity against Gram-positive bacterium M.luteus NCT C2665 but not against Gram-negative bacterium E.coli K12D31. The protein is Dermaseptin-related peptide of Agalychnis callidryas (Red-eyed tree frog).